The primary structure comprises 146 residues: MKLHELKAAEGTRKERNRVGRGMSSGNGKTSGRGHKGQKARSGGGVRPGFEGGQMPLFQRLPKRGFTNVNRKEYAIVNLDTLNRFEEGTEITPELLLETGVVSKLNAGIKILGKGTLEKKLTVKAHKFSASAKEAIETAGGQSEVI.

The segment covering 1–18 (MKLHELKAAEGTRKERNR) has biased composition (basic and acidic residues). Residues 1 to 58 (MKLHELKAAEGTRKERNRVGRGMSSGNGKTSGRGHKGQKARSGGGVRPGFEGGQMPLF) are disordered. Residues 42-52 (SGGGVRPGFEG) are compositionally biased toward gly residues.

The protein belongs to the universal ribosomal protein uL15 family. As to quaternary structure, part of the 50S ribosomal subunit.

Its function is as follows. Binds to the 23S rRNA. This chain is Large ribosomal subunit protein uL15, found in Oceanobacillus iheyensis (strain DSM 14371 / CIP 107618 / JCM 11309 / KCTC 3954 / HTE831).